We begin with the raw amino-acid sequence, 244 residues long: Lipid A 1-phosphatase (244 aa).

Transmembrane regions (helical) follow at residues 28-48 (LFVT…PIGA), 60-80 (ELLT…LLFF), 98-118 (ALYV…SGLL), 154-174 (FPSG…LLFP), 178-198 (VAFI…GAHY), and 201-221 (DVIA…IVFA).

This sequence belongs to the lipid A LpxE 1-phosphatase family.

Its subcellular location is the cell inner membrane. Its pathway is bacterial outer membrane biogenesis; LPS lipid A biosynthesis. In terms of biological role, removes the 1-phosphate group from (tetraacyl) lipid A species, has no requirement for the Kdo(2) moiety of lipid A. Has no 4'-phosphatase activity. Reduces sensitivity of S.meliloti strain 1021 to the cationic antimicrobial peptide (CAMP) polymyxin B. The sequence is that of Lipid A 1-phosphatase from Rhizobium johnstonii (strain DSM 114642 / LMG 32736 / 3841) (Rhizobium leguminosarum bv. viciae).